Reading from the N-terminus, the 476-residue chain is Probable isoprenylcysteine alpha-carbonyl methylesterase ICMEL1 (476 aa).

A compositionally biased stretch (polar residues) spans 92 to 104; the sequence is NCLSAFSDDTNGT. The disordered stretch occupies residues 92-116; that stretch reads NCLSAFSDDTNGTADGGNNSGDRQT. The next 2 helical transmembrane spans lie at 153-173 and 208-228; these read FMAL…VGYY and VVAF…GSLL. Residues 214–216 and 285–287 contribute to the substrate site; these read GGA and QSA. Residues S286, D388, and H420 contribute to the active site.

It belongs to the AB hydrolase superfamily. Isoprenylcysteine methylesterase family. As to expression, expressed in roots, rosette and cauline leaves, stems, flowers and siliques.

It localises to the endoplasmic reticulum membrane. The protein resides in the golgi apparatus membrane. The enzyme catalyses [protein]-C-terminal S-[(2E,6E)-farnesyl]-L-cysteine methyl ester + H2O = [protein]-C-terminal S-[(2E,6E)-farnesyl]-L-cysteine + methanol + H(+). Catalyzes the demethylation of isoprenylcysteine methylesters. May be involved in the regulation of ABA signaling. The chain is Probable isoprenylcysteine alpha-carbonyl methylesterase ICMEL1 from Arabidopsis thaliana (Mouse-ear cress).